The chain runs to 394 residues: Elongation factor Tu 1 (394 aa).

The tr-type G domain maps to 10-204; it reads KPHVNVGTIG…ALDSYIPEPE (195 aa). Residues 19–26 are G1; sequence GHVDHGKT. 19–26 contacts GTP; it reads GHVDHGKT. Thr26 lines the Mg(2+) pocket. Residues 60–64 are G2; that stretch reads GITIN. Residues 81–84 are G3; the sequence is DCPG. GTP-binding positions include 81–85 and 136–139; these read DCPGH and NKCD. The interval 136 to 139 is G4; it reads NKCD. The interval 174 to 176 is G5; that stretch reads SAL.

It belongs to the TRAFAC class translation factor GTPase superfamily. Classic translation factor GTPase family. EF-Tu/EF-1A subfamily. As to quaternary structure, monomer.

It localises to the cytoplasm. The enzyme catalyses GTP + H2O = GDP + phosphate + H(+). Functionally, GTP hydrolase that promotes the GTP-dependent binding of aminoacyl-tRNA to the A-site of ribosomes during protein biosynthesis. This Shewanella sp. (strain MR-4) protein is Elongation factor Tu 1.